The following is a 282-amino-acid chain: ATP synthase subunit a (282 aa).

Transmembrane regions (helical) follow at residues 38 to 58 (VDSM…LWLA), 97 to 117 (FVAP…AMDM), 145 to 165 (VVPT…LLLC), 187 to 207 (FGSH…EFVA), 225 to 247 (LIFI…GHIV), and 261 to 281 (TLQA…AHEG).

Belongs to the ATPase A chain family. As to quaternary structure, F-type ATPases have 2 components, CF(1) - the catalytic core - and CF(0) - the membrane proton channel. CF(1) has five subunits: alpha(3), beta(3), gamma(1), delta(1), epsilon(1). CF(0) has three main subunits: a(1), b(2) and c(9-12). The alpha and beta chains form an alternating ring which encloses part of the gamma chain. CF(1) is attached to CF(0) by a central stalk formed by the gamma and epsilon chains, while a peripheral stalk is formed by the delta and b chains.

It is found in the cell inner membrane. Key component of the proton channel; it plays a direct role in the translocation of protons across the membrane. In Azoarcus sp. (strain BH72), this protein is ATP synthase subunit a.